A 252-amino-acid chain; its full sequence is Lipoprotein PrgK (252 aa).

An N-terminal signal peptide occupies residues 1–17 (MIRRYLYTFLLVMTLAG). The N-palmitoyl cysteine moiety is linked to residue cysteine 18. The S-diacylglycerol cysteine moiety is linked to residue cysteine 18. The chain crosses the membrane as a helical span at residues 207–227 (FATSWIVLIILLSVMSAGFGV).

Belongs to the YscJ lipoprotein family.

Its subcellular location is the cell outer membrane. Functionally, required for invasion of epithelial cells. Could be involved in protein secretion. The sequence is that of Lipoprotein PrgK (prgK) from Salmonella typhimurium (strain LT2 / SGSC1412 / ATCC 700720).